A 332-amino-acid chain; its full sequence is Holliday junction branch migration complex subunit RuvB (332 aa).

A large ATPase domain (RuvB-L) region spans residues 1–181 (MSRILDNEMM…FGITGHMEYY (181 aa)). Residues L20, R21, G62, K65, T66, T67, 128–130 (EDF), R171, Y181, and R218 each bind ATP. Residue T66 participates in Mg(2+) binding. Positions 182–252 (AHADLTEIVE…ITDKALTMLD (71 aa)) are small ATPAse domain (RuvB-S). The tract at residues 255-332 (HEGLDYVDQK…EHLGYEYSEK (78 aa)) is head domain (RuvB-H). Residues R291, R310, R312, and R315 each coordinate DNA.

This sequence belongs to the RuvB family. As to quaternary structure, homohexamer. Forms an RuvA(8)-RuvB(12)-Holliday junction (HJ) complex. HJ DNA is sandwiched between 2 RuvA tetramers; dsDNA enters through RuvA and exits via RuvB. An RuvB hexamer assembles on each DNA strand where it exits the tetramer. Each RuvB hexamer is contacted by two RuvA subunits (via domain III) on 2 adjacent RuvB subunits; this complex drives branch migration. In the full resolvosome a probable DNA-RuvA(4)-RuvB(12)-RuvC(2) complex forms which resolves the HJ.

The protein localises to the cytoplasm. It carries out the reaction ATP + H2O = ADP + phosphate + H(+). In terms of biological role, the RuvA-RuvB-RuvC complex processes Holliday junction (HJ) DNA during genetic recombination and DNA repair, while the RuvA-RuvB complex plays an important role in the rescue of blocked DNA replication forks via replication fork reversal (RFR). RuvA specifically binds to HJ cruciform DNA, conferring on it an open structure. The RuvB hexamer acts as an ATP-dependent pump, pulling dsDNA into and through the RuvAB complex. RuvB forms 2 homohexamers on either side of HJ DNA bound by 1 or 2 RuvA tetramers; 4 subunits per hexamer contact DNA at a time. Coordinated motions by a converter formed by DNA-disengaged RuvB subunits stimulates ATP hydrolysis and nucleotide exchange. Immobilization of the converter enables RuvB to convert the ATP-contained energy into a lever motion, pulling 2 nucleotides of DNA out of the RuvA tetramer per ATP hydrolyzed, thus driving DNA branch migration. The RuvB motors rotate together with the DNA substrate, which together with the progressing nucleotide cycle form the mechanistic basis for DNA recombination by continuous HJ branch migration. Branch migration allows RuvC to scan DNA until it finds its consensus sequence, where it cleaves and resolves cruciform DNA. This chain is Holliday junction branch migration complex subunit RuvB, found in Streptococcus pneumoniae serotype 19F (strain G54).